We begin with the raw amino-acid sequence, 139 residues long: Ribulose bisphosphate carboxylase small subunit (139 aa).

It belongs to the RuBisCO small chain family. As to quaternary structure, heterohexadecamer of 8 large and 8 small subunits.

The protein resides in the plastid. Its subcellular location is the chloroplast. Its function is as follows. RuBisCO catalyzes two reactions: the carboxylation of D-ribulose 1,5-bisphosphate, the primary event in carbon dioxide fixation, as well as the oxidative fragmentation of the pentose substrate in the photorespiration process. Both reactions occur simultaneously and in competition at the same active site. Although the small subunit is not catalytic it is essential for maximal activity. In Guillardia theta (Cryptophyte), this protein is Ribulose bisphosphate carboxylase small subunit.